A 99-amino-acid chain; its full sequence is Protein IDA-LIKE 3 (99 aa).

The first 32 residues, 1 to 32 (MSSRSHRSRKYQLTRTIPILVLLLVLLSCCNG), serve as a signal peptide directing secretion. Polar residues predominate over residues 36-45 (TNVFNTSSPP). Disordered regions lie at residues 36–58 (TNVF…HDHV) and 73–99 (SLPR…STKT). Over residues 46-58 (KQKDVVSPPHDHV) the composition is skewed to basic and acidic residues.

In terms of tissue distribution, expressed in flowers and seedlings. Detected at the base of pedicel, in the floral abscission zone and in vascular tissues.

Its subcellular location is the secreted. It localises to the extracellular space. Functionally, may be involved in floral abscission. The protein is Protein IDA-LIKE 3 (IDL3) of Arabidopsis thaliana (Mouse-ear cress).